Consider the following 113-residue polypeptide: uncharacterized protein (113 aa).

Positions 94-113 (SKTGLDEQAHVQKAHDVQDV) are disordered. Basic and acidic residues predominate over residues 96–113 (TGLDEQAHVQKAHDVQDV).

It belongs to the geminiviridae protein AV2/V2 family. In terms of assembly, interacts with host SGS3.

It localises to the host cytoplasm. The protein resides in the host perinuclear region. Its function is as follows. Through its interaction with host SGS3, acts as a suppressor of RNA-mediated gene silencing, also known as post-transcriptional gene silencing (PTGS), a mechanism of plant viral defense that limits the accumulation of viral RNAs. This is an uncharacterized protein from African cassava mosaic virus (isolate Nigerian) (ACMV).